Here is a 364-residue protein sequence, read N- to C-terminus: MKRRLVLENGAVFEGEAFGSLEHNMGEVVFNTGMTGYQEILSDPSYCGQIVTLTYPLIGNYGINRDDFESITPFVKGLIIKELCELPSNWRSAYTLDEYLKMKNIPGLQGIDTRKLTRMIRTAGALKGTFASSDEDIEAVLKRLNETELPRNQVSQVSAKTAYPSPGRGKRIVLVDFGMKHGILRELNKRKCDVIVVPYNITAEEVLQLKPDGIMLSNGPGDPKDVPEAIEMIKGVLGKVPLFGICLGHQLFALACGANTEKMKFGHRGSNHPVKELATGKVALTSQNHGYTVSSISKTELEVTHIAINDDTIEGLKHKTLPAFTVQYHPEASPGPEDANHLFDRFIEMIETTEKEGEAVCQNA.

The segment at 1-171 (MKRRLVLENG…AYPSPGRGKR (171 aa)) is CPSase. Serine 45, glycine 219, and glycine 221 together coordinate L-glutamine. In terms of domain architecture, Glutamine amidotransferase type-1 spans 171 to 356 (RIVLVDFGMK…IEMIETTEKE (186 aa)). Cysteine 246 acts as the Nucleophile in catalysis. The L-glutamine site is built by leucine 247, glutamine 250, asparagine 288, glycine 290, and tyrosine 291. Residues histidine 329 and glutamate 331 contribute to the active site.

Belongs to the CarA family. As to quaternary structure, composed of two chains; the small (or glutamine) chain promotes the hydrolysis of glutamine to ammonia, which is used by the large (or ammonia) chain to synthesize carbamoyl phosphate. Tetramer of heterodimers (alpha,beta)4. Interacts with BrxC.

The catalysed reaction is hydrogencarbonate + L-glutamine + 2 ATP + H2O = carbamoyl phosphate + L-glutamate + 2 ADP + phosphate + 2 H(+). The enzyme catalyses L-glutamine + H2O = L-glutamate + NH4(+). It participates in pyrimidine metabolism; UMP biosynthesis via de novo pathway; (S)-dihydroorotate from bicarbonate: step 1/3. In terms of biological role, small subunit of the glutamine-dependent carbamoyl phosphate synthetase (CPSase). CPSase catalyzes the formation of carbamoyl phosphate from the ammonia moiety of glutamine, carbonate, and phosphate donated by ATP, constituting the first step of the biosynthetic pathway leading to arginine and/or urea. The small subunit (glutamine amidotransferase) binds and cleaves glutamine to supply the large subunit with the substrate ammonia. The protein is Carbamoyl phosphate synthase pyrimidine-specific small chain of Bacillus subtilis (strain 168).